A 560-amino-acid chain; its full sequence is Oxygen-dependent choline dehydrogenase (560 aa).

An FAD-binding site is contributed by 8 to 37; the sequence is DYIIIGAGSAGNVLATRLTEDADVSVLLLE. Residue His475 is the Proton acceptor of the active site.

This sequence belongs to the GMC oxidoreductase family. FAD is required as a cofactor.

It carries out the reaction choline + A = betaine aldehyde + AH2. The enzyme catalyses betaine aldehyde + NAD(+) + H2O = glycine betaine + NADH + 2 H(+). It functions in the pathway amine and polyamine biosynthesis; betaine biosynthesis via choline pathway; betaine aldehyde from choline (cytochrome c reductase route): step 1/1. Its function is as follows. Involved in the biosynthesis of the osmoprotectant glycine betaine. Catalyzes the oxidation of choline to betaine aldehyde and betaine aldehyde to glycine betaine at the same rate. This is Oxygen-dependent choline dehydrogenase from Stenotrophomonas maltophilia (strain K279a).